The chain runs to 1037 residues: Multidrug resistance protein MdtF (1037 aa).

Residues 1–9 (MANYFIDRP) lie on the Cytoplasmic side of the membrane. Residues 10-30 (VFAWVLAIIMMLAGGLAIMNL) form a helical membrane-spanning segment. Topologically, residues 31–338 (PVAQYPQIAP…TTPFIKISIQ (308 aa)) are periplasmic. A helical transmembrane segment spans residues 339–359 (EVFKTLVEAIILVFLVMYLFL). Residues 360–369 (QNFRATIIPT) lie on the Cytoplasmic side of the membrane. A helical transmembrane segment spans residues 370 to 390 (IAVPVVILGTFAILSAVGFTI). Over 391-392 (NT) the chain is Periplasmic. A helical membrane pass occupies residues 393 to 413 (LTMFGMVLAIGLLVDDAIVVV). The Cytoplasmic portion of the chain corresponds to 414–440 (ENVERVIAEDKLPPKEATHKSMGQIQR). Residues 441 to 461 (ALVGIAVVLSAVFMPMAFMSG) traverse the membrane as a helical segment. Topologically, residues 462–471 (ATGEIYRQFS) are periplasmic. The helical transmembrane segment at 472 to 492 (ITLISSMLLSVFVAMSLTPAL) threads the bilayer. The Cytoplasmic segment spans residues 493–534 (CATILKAAPEGGHKPNALFARFNTLFEKSTQHYTDSTRSLLR). The helical transmembrane segment at 535 to 555 (CTGRYMVVYLLICAGMAVLFL) threads the bilayer. The Periplasmic segment spans residues 556 to 870 (RTPTSFLPEE…SYQEALSSNQ (315 aa)). The helical transmembrane segment at 871 to 891 (APALYAISLVVVFLALAALYE) threads the bilayer. Position 892 (Ser-892) is a topological domain, cytoplasmic. A helical membrane pass occupies residues 893–913 (WSIPFSVMLVVPLGVVGALLA). Residues 914 to 927 (TDLRGLSNDVYFQV) lie on the Periplasmic side of the membrane. The helical transmembrane segment at 928-948 (GLLTTIGLSAKNAILIVEFAV) threads the bilayer. Residues 949 to 972 (EMMQKEGKTPVEAIIEAARMRLRP) lie on the Cytoplasmic side of the membrane. A helical membrane pass occupies residues 973–993 (ILMTSLAFILGVLPLVISHGA). Over 994-1006 (GSGAQNAVGTGVM) the chain is Periplasmic. The chain crosses the membrane as a helical span at residues 1007–1027 (GGMFAATVLAIYFVPVFFVVV). The Cytoplasmic portion of the chain corresponds to 1028–1037 (EHLFARFKKA).

The protein belongs to the resistance-nodulation-cell division (RND) (TC 2.A.6) family. Homotrimer. Part of the tripartite efflux system MdtEF-TolC, which is composed of an inner membrane transporter, MdtF, a membrane fusion protein, MdtE, and an outer membrane component, TolC. The complex forms a large protein conduit and can translocate molecules across both the inner and outer membranes.

The protein localises to the cell inner membrane. Its function is as follows. Part of the tripartite efflux system MdtEF-TolC, which confers resistance to various compounds. This is Multidrug resistance protein MdtF (mdtF) from Escherichia coli O6:H1 (strain CFT073 / ATCC 700928 / UPEC).